A 129-amino-acid chain; its full sequence is MKEVIDTVGRRKTSVARAFLTPGKGTVTVNKRPVEEYFKDEFKRQQALRPLTLCEKAEEFDVKINVQGGGLSGQSGAVSLAIARALTESDEALRAVLRTERLLTRDPRMVERKKFGRKKARKRFQFSKR.

The protein belongs to the universal ribosomal protein uS9 family.

The sequence is that of Small ribosomal subunit protein uS9 from Chlorobium chlorochromatii (strain CaD3).